Here is a 609-residue protein sequence, read N- to C-terminus: Alpha-fetoprotein (609 aa).

Positions 1 to 18 (MKWVESIFLIFLLNFTES) are cleaved as a signal peptide. Albumin domains are found at residues 19–210 (RTLH…ATVT), 211–402 (KELR…EELQ), and 403–601 (KYIQ…KLIS). His-22 serves as a coordination point for Cu(2+). 8 cysteine pairs are disulfide-bonded: Cys-99-Cys-114, Cys-113-Cys-124, Cys-148-Cys-193, Cys-192-Cys-201, Cys-224-Cys-270, Cys-269-Cys-277, Cys-289-Cys-303, and Cys-302-Cys-313. A phosphoserine; by FAM20C mark is found at Ser-111, Ser-115, and Ser-117. N-linked (GlcNAc...) asparagine glycosylation is present at Asn-251. Residue Ser-344 is modified to Phosphoserine; by FAM20C. 7 disulfide bridges follow: Cys-384/Cys-393, Cys-416/Cys-462, Cys-461/Cys-472, Cys-485/Cys-501, Cys-500/Cys-511, Cys-538/Cys-583, and Cys-582/Cys-591. Phosphoserine; by FAM20C is present on residues Ser-444 and Ser-445.

It belongs to the ALB/AFP/VDB family. In terms of assembly, dimeric and trimeric forms have been found in addition to the monomeric form. In terms of processing, independent studies suggest heterogeneity of the N-terminal sequence of the mature protein and of the cleavage site of the signal sequence. Post-translationally, sulfated. Plasma. Synthesized by the fetal liver and yolk sac.

The protein resides in the secreted. Binds copper, nickel, and fatty acids as well as, and bilirubin less well than, serum albumin. Only a small percentage (less than 2%) of the human AFP shows estrogen-binding properties. This Homo sapiens (Human) protein is Alpha-fetoprotein (AFP).